A 274-amino-acid chain; its full sequence is Glutamate--cysteine ligase regulatory subunit (274 aa).

At S59 the chain carries Phosphoserine. N6-acetyllysine is present on K263.

Belongs to the aldo/keto reductase family. Glutamate--cysteine ligase light chain subfamily. Heterodimer of a catalytic heavy chain and a regulatory light chain.

The protein operates within sulfur metabolism; glutathione biosynthesis; glutathione from L-cysteine and L-glutamate: step 1/2. This is Glutamate--cysteine ligase regulatory subunit (GCLM) from Bos taurus (Bovine).